Consider the following 156-residue polypeptide: Small ribosomal subunit protein uS7 (156 aa).

This sequence belongs to the universal ribosomal protein uS7 family. In terms of assembly, part of the 30S ribosomal subunit. Contacts proteins S9 and S11.

One of the primary rRNA binding proteins, it binds directly to 16S rRNA where it nucleates assembly of the head domain of the 30S subunit. Is located at the subunit interface close to the decoding center, probably blocks exit of the E-site tRNA. The protein is Small ribosomal subunit protein uS7 of Pseudomonas entomophila (strain L48).